Consider the following 198-residue polypeptide: 7-methyl-GTP pyrophosphatase (198 aa).

The Proton acceptor role is filled by Asp-69.

The protein belongs to the Maf family. YceF subfamily. The cofactor is a divalent metal cation.

It is found in the cytoplasm. It catalyses the reaction N(7)-methyl-GTP + H2O = N(7)-methyl-GMP + diphosphate + H(+). Its function is as follows. Nucleoside triphosphate pyrophosphatase that hydrolyzes 7-methyl-GTP (m(7)GTP). May have a dual role in cell division arrest and in preventing the incorporation of modified nucleotides into cellular nucleic acids. The polypeptide is 7-methyl-GTP pyrophosphatase (Yersinia pestis bv. Antiqua (strain Antiqua)).